Reading from the N-terminus, the 366-residue chain is Peptide chain release factor 1 (366 aa).

Gln230 is subject to N5-methylglutamine. 2 stretches are compositionally biased toward basic and acidic residues: residues 283-293 (ARDAQEARDRA) and 315-328 (VTDH…KNHP). The disordered stretch occupies residues 283-335 (ARDAQEARDRAAQVGSGERSEKIRTYNYPQNRVTDHRLEGDSKNHPLDSVMAG).

It belongs to the prokaryotic/mitochondrial release factor family. In terms of processing, methylated by PrmC. Methylation increases the termination efficiency of RF1.

It localises to the cytoplasm. Its function is as follows. Peptide chain release factor 1 directs the termination of translation in response to the peptide chain termination codons UAG and UAA. The chain is Peptide chain release factor 1 from Deinococcus deserti (strain DSM 17065 / CIP 109153 / LMG 22923 / VCD115).